A 718-amino-acid chain; its full sequence is Putative proline-rich receptor-like protein kinase PERK11 (718 aa).

The segment at 1–256 is disordered; that stretch reads MDKVQQQADL…GGTSQQSNES (256 aa). The Extracellular segment spans residues 1–262; sequence MDKVQQQADL…SNESNYTEKT (262 aa). 3 stretches are compositionally biased toward pro residues: residues 45–105, 115–132, and 157–167; these read ATSP…PPQS, IPFP…PPPS, and LPSPPSTPFSP. Low complexity-rich tracts occupy residues 168-203 and 211-244; these read PSQE…LQPL and SNRV…ANSN. N-linked (GlcNAc...) asparagine glycosylation is found at Asn231, Asn254, and Asn257. A helical transmembrane segment spans residues 263–283; sequence VIGIGIAGVLVILFIAGVFFV. At 284–718 the chain is on the cytoplasmic side; sequence RRKQKKGSSS…RAFNTSHRNH (435 aa). Positions 314–348 are disordered; the sequence is HYRQKPGNGNSSAQNSSPDTNSLGNPKHGRGTPDS. Residues 320-337 show a composition bias toward polar residues; it reads GNGNSSAQNSSPDTNSLG. At Thr359 the chain carries Phosphothreonine. Positions 370 to 649 constitute a Protein kinase domain; it reads FCKSFVVGEG…VRALDTRDDL (280 aa). Residues 376-384 and Lys398 each bind ATP; that span reads VGEGGFGCV. A Phosphotyrosine modification is found at Tyr443. Asp494 functions as the Proton acceptor in the catalytic mechanism. 2 positions are modified to phosphoserine: Ser498 and Ser527. A phosphothreonine mark is found at Thr528 and Thr533. Phosphotyrosine is present on Tyr541. The segment at 683–718 is disordered; that stretch reads SSDLGTNTGYYPSQDYATSHEYESESRAFNTSHRNH. Polar residues-rich tracts occupy residues 685–699 and 709–718; these read DLGT…QDYA and RAFNTSHRNH.

The protein belongs to the protein kinase superfamily. Ser/Thr protein kinase family. Mostly expressed in flower buds.

The protein localises to the cell membrane. The enzyme catalyses L-seryl-[protein] + ATP = O-phospho-L-seryl-[protein] + ADP + H(+). It carries out the reaction L-threonyl-[protein] + ATP = O-phospho-L-threonyl-[protein] + ADP + H(+). This is Putative proline-rich receptor-like protein kinase PERK11 (PERK11) from Arabidopsis thaliana (Mouse-ear cress).